The chain runs to 199 residues: Large ribosomal subunit protein uL18 (199 aa).

This sequence belongs to the universal ribosomal protein uL18 family. As to quaternary structure, part of the 50S ribosomal subunit. Contacts the 5S and 23S rRNAs.

Functionally, this is one of the proteins that bind and probably mediate the attachment of the 5S RNA into the large ribosomal subunit, where it forms part of the central protuberance. The protein is Large ribosomal subunit protein uL18 of Saccharolobus solfataricus (strain ATCC 35092 / DSM 1617 / JCM 11322 / P2) (Sulfolobus solfataricus).